The following is a 503-amino-acid chain: Drimenol monooxygenase (503 aa).

The chain crosses the membrane as a helical span at residues 7–23 (MICIVVSGLLLYSSRTS). Ser-471 is a heme binding site.

This sequence belongs to the cytochrome P450 family. The cofactor is heme.

Its subcellular location is the membrane. It catalyses the reaction (5S,9S,10S)-drim-7-en-11-ol + reduced [NADPH--hemoprotein reductase] + O2 = (5S,10S)-(9R)-7-drimene-11,12-diol + oxidized [NADPH--hemoprotein reductase] + H2O + H(+). In terms of biological role, catalyzes the conversion of drimenol to drimendiol, a precursor of the sesquiterpenoid polygodial. Polygodial has been shown to be an antifeedant for a number of herbivorous insects. The chain is Drimenol monooxygenase from Persicaria hydropiper (Marshpepper knotweed).